A 108-amino-acid chain; its full sequence is uncharacterized protein (108 aa).

Positions 39 to 68 (GLRSRSGTGSGNSRNGLKESGGSRSGPGKP) are enriched in low complexity. Positions 39–95 (GLRSRSGTGSGNSRNGLKESGGSRSGPGKPRGNRKSSRRIRPRPTSEKPRGYWRSSW) are disordered. A compositionally biased stretch (basic residues) spans 69–80 (RGNRKSSRRIRP).

This is an uncharacterized protein from Acidithiobacillus ferridurans.